The chain runs to 180 residues: ATP synthase subunit b (180 aa).

Residues 26–46 (IPLMLATLAALVISIFFLTYF) form a helical membrane-spanning segment.

It belongs to the ATPase B chain family. In terms of assembly, F-type ATPases have 2 components, F(1) - the catalytic core - and F(0) - the membrane proton channel. F(1) has five subunits: alpha(3), beta(3), gamma(1), delta(1), epsilon(1). F(0) has three main subunits: a(1), b(2) and c(10-14). The alpha and beta chains form an alternating ring which encloses part of the gamma chain. F(1) is attached to F(0) by a central stalk formed by the gamma and epsilon chains, while a peripheral stalk is formed by the delta and b chains.

It localises to the cell membrane. In terms of biological role, f(1)F(0) ATP synthase produces ATP from ADP in the presence of a proton or sodium gradient. F-type ATPases consist of two structural domains, F(1) containing the extramembraneous catalytic core and F(0) containing the membrane proton channel, linked together by a central stalk and a peripheral stalk. During catalysis, ATP synthesis in the catalytic domain of F(1) is coupled via a rotary mechanism of the central stalk subunits to proton translocation. Its function is as follows. Component of the F(0) channel, it forms part of the peripheral stalk, linking F(1) to F(0). This Mycoplasmopsis pulmonis (strain UAB CTIP) (Mycoplasma pulmonis) protein is ATP synthase subunit b.